A 425-amino-acid polypeptide reads, in one-letter code: Enolase (425 aa).

(2R)-2-phosphoglycerate is bound at residue Gln-162. Glu-204 serves as the catalytic Proton donor. Mg(2+) is bound by residues Asp-241, Glu-282, and Asp-309. (2R)-2-phosphoglycerate is bound by residues Lys-334, Arg-363, Ser-364, and Lys-385. Lys-334 functions as the Proton acceptor in the catalytic mechanism.

It belongs to the enolase family. The cofactor is Mg(2+).

The protein resides in the cytoplasm. The protein localises to the secreted. It localises to the cell surface. It catalyses the reaction (2R)-2-phosphoglycerate = phosphoenolpyruvate + H2O. The protein operates within carbohydrate degradation; glycolysis; pyruvate from D-glyceraldehyde 3-phosphate: step 4/5. In terms of biological role, catalyzes the reversible conversion of 2-phosphoglycerate (2-PG) into phosphoenolpyruvate (PEP). It is essential for the degradation of carbohydrates via glycolysis. This is Enolase from Corynebacterium urealyticum (strain ATCC 43042 / DSM 7109).